The chain runs to 127 residues: Fumarate reductase subunit C (127 aa).

Transmembrane regions (helical) follow at residues Ala30–Val50, Ile67–Phe87, and Ile107–Met127.

The protein belongs to the FrdC family. As to quaternary structure, part of an enzyme complex containing four subunits: a flavoprotein (FrdA), an iron-sulfur protein (FrdB), and two hydrophobic anchor proteins (FrdC and FrdD).

It is found in the cell inner membrane. Its function is as follows. Anchors the catalytic components of the fumarate reductase complex to the cell membrane, binds quinones. The polypeptide is Fumarate reductase subunit C (Vibrio campbellii (strain ATCC BAA-1116)).